A 351-amino-acid chain; its full sequence is Methylxanthine N1-demethylase NdmA (351 aa).

Residues 17–125 enclose the Rieske domain; sequence WHPVCTVTEL…CEERYGLIWI (109 aa). Positions 62, 64, 81, and 84 each coordinate [2Fe-2S] cluster.

The cofactor is [2Fe-2S] cluster.

The enzyme catalyses caffeine + NADH + O2 + H(+) = theobromine + formaldehyde + NAD(+) + H2O. The catalysed reaction is caffeine + NADPH + O2 + H(+) = theobromine + formaldehyde + NADP(+) + H2O. It carries out the reaction theophylline + NADH + O2 + H(+) = 3-methylxanthine + formaldehyde + NAD(+) + H2O. It catalyses the reaction theophylline + NADPH + O2 + H(+) = 3-methylxanthine + formaldehyde + NADP(+) + H2O. The enzyme catalyses 1,7-dimethylxanthine + NADH + O2 + H(+) = 7-methylxanthine + formaldehyde + NAD(+) + H2O. The catalysed reaction is 1,7-dimethylxanthine + NADPH + O2 + H(+) = 7-methylxanthine + formaldehyde + NADP(+) + H2O. It functions in the pathway alkaloid degradation. In terms of biological role, involved in the caffeine degradation, which is the essential first step for assimilating the carbon and nitrogen in caffeine. Catalyzes the N1-demethylation of caffeine to produce theobromine and formaldehyde. Also catalyzes the N1-demethylation of theophylline, paraxanthine, and 1-methylxanthine to 3-methylxanthine, 7-methylxanthine, and xanthine, respectively. NADH is the preferred substrate. This is Methylxanthine N1-demethylase NdmA (ndmA) from Pseudomonas putida (Arthrobacter siderocapsulatus).